The primary structure comprises 406 residues: Acetamidase (406 aa).

A compositionally biased stretch (low complexity) spans 387–399; the sequence is CRPRSSTSTSPRR. A disordered region spans residues 387 to 406; sequence CRPRSSTSTSPRRQGPAEGR.

It belongs to the acetamidase/formamidase family.

It carries out the reaction a monocarboxylic acid amide + H2O = a monocarboxylate + NH4(+). The catalysed reaction is acetamide + H2O = acetate + NH4(+). Its function is as follows. Allows acetamide to be used as a sole carbon or nitrogen source. This is Acetamidase (amdA) from Mycolicibacterium smegmatis (Mycobacterium smegmatis).